We begin with the raw amino-acid sequence, 538 residues long: CTP synthase (538 aa).

An amidoligase domain region spans residues 1–269; the sequence is MSPRKYVIVT…ARLVERRLFG (269 aa). Ser-15 serves as a coordination point for CTP. UTP is bound at residue Ser-15. Residue 16 to 21 coordinates ATP; that stretch reads SVGKGL. Tyr-56 serves as a coordination point for L-glutamine. Position 73 (Asp-73) interacts with ATP. Residues Asp-73 and Glu-143 each contribute to the Mg(2+) site. Residues 150–152, 190–195, and Lys-226 contribute to the CTP site; these read DIE and KTKPVQ. UTP-binding positions include 190–195 and Lys-226; that span reads KTKPVQ. In terms of domain architecture, Glutamine amidotransferase type-1 spans 294 to 538; that stretch reads KVAMVGKYTK…FVTAVARLRG (245 aa). Gly-358 is an L-glutamine binding site. The active-site Nucleophile; for glutamine hydrolysis is Cys-385. L-glutamine-binding positions include 386–389, Glu-409, and Arg-466; that span reads FGMQ. Residues His-512 and Glu-514 contribute to the active site.

Belongs to the CTP synthase family. In terms of assembly, homotetramer.

The catalysed reaction is UTP + L-glutamine + ATP + H2O = CTP + L-glutamate + ADP + phosphate + 2 H(+). The enzyme catalyses L-glutamine + H2O = L-glutamate + NH4(+). It catalyses the reaction UTP + NH4(+) + ATP = CTP + ADP + phosphate + 2 H(+). Its pathway is pyrimidine metabolism; CTP biosynthesis via de novo pathway; CTP from UDP: step 2/2. With respect to regulation, allosterically activated by GTP, when glutamine is the substrate; GTP has no effect on the reaction when ammonia is the substrate. The allosteric effector GTP functions by stabilizing the protein conformation that binds the tetrahedral intermediate(s) formed during glutamine hydrolysis. Inhibited by the product CTP, via allosteric rather than competitive inhibition. Catalyzes the ATP-dependent amination of UTP to CTP with either L-glutamine or ammonia as the source of nitrogen. Regulates intracellular CTP levels through interactions with the four ribonucleotide triphosphates. The polypeptide is CTP synthase (Aeropyrum pernix (strain ATCC 700893 / DSM 11879 / JCM 9820 / NBRC 100138 / K1)).